The sequence spans 593 residues: SPI-1 type 3 secretion system translocon protein SctE (593 aa).

2 coiled-coil regions span residues 151–208 and 287–314; these read DTAK…ATDA and EGRQ…NRIM. Transmembrane regions (helical) follow at residues 330-350 and 409-429; these read VVAA…GLAV and IVGA…VAVV.

The protein belongs to the SctE/SipB/YopB family. In terms of assembly, the core secretion machinery of the T3SS is composed of approximately 20 different proteins, including cytoplasmic components, a base, an export apparatus and a needle. This subunit is involved in the formation of a pore, called the translocon, in host membrane.

The protein localises to the secreted. It is found in the host membrane. It localises to the host cell. In terms of biological role, component of the type III secretion system 1 (SPI-1 T3SS), also called injectisome, which is used to inject bacterial effector proteins into eukaryotic host cells. SipB/SctE1 and SipC/SctB are inserted into the host membrane where they form a pore and allow the translocation of effector proteins into the cytosol of target cells. Its function is as follows. Induces macrophage apoptosis either by binding and activating the proapoptotic enzyme caspase-1 (caspase-1 dependent), resulting in the release of interleukin-1 beta active form, or by disrupting mitochondria and inducing autophagy (caspase-1 independent). The former is dependent of its membrane-fusion activity. This chain is SPI-1 type 3 secretion system translocon protein SctE, found in Salmonella typhi.